The following is a 682-amino-acid chain: Solute carrier organic anion transporter family member 2B1 (682 aa).

The segment at 1-30 (MPDRSTKATMGAEDIHERKVSMEPRDSHQD) is disordered. Over 1 to 41 (MPDRSTKATMGAEDIHERKVSMEPRDSHQDAQPRGMFQNIK) the chain is Cytoplasmic. Residues 13–30 (EDIHERKVSMEPRDSHQD) are compositionally biased toward basic and acidic residues. Serine 21 is modified (phosphoserine). Residues 42-61 (FFVLCHSILQLAQLMISGYL) form a helical membrane-spanning segment. At 62 to 80 (KSSISTVEKRFGLSSQTSG) the chain is on the extracellular side. A helical transmembrane segment spans residues 81 to 101 (LLAAFNEVGNISLILFVSYFG). At 102–107 (SRVHRP) the chain is on the cytoplasmic side. The chain crosses the membrane as a helical span at residues 108-132 (RMIGCGAILVAVAGLLMALPHFISE). The Extracellular portion of the chain corresponds to 133–176 (PYRYDHSSPDRSQDFEASLCLPTTMAPASALSNDSCSSRTETKH). A glycan (N-linked (GlcNAc...) asparagine) is linked at asparagine 165. A helical membrane pass occupies residues 177–206 (LTMVGIMFTAQTLLGIGGVPIQPFGISYID). Over 207–225 (DFAHHSNSPLYLGILFAIT) the chain is Cytoplasmic. The helical transmembrane segment at 226–246 (MMGPGLAYGLGSLMLRLYVDI) threads the bilayer. The Extracellular portion of the chain corresponds to 247–264 (DRMPEGGINLTTKDPRWV). Residue asparagine 255 is glycosylated (N-linked (GlcNAc...) asparagine). Residues 265 to 289 (GAWWLGFLISAGLVVLAASPYFFFP) form a helical membrane-spanning segment. Topologically, residues 290–354 (REMPKEKYEL…IKVFPRVLLR (65 aa)) are cytoplasmic. Serine 311 and serine 314 each carry phosphoserine. Residues 355–376 (TLRHPIFLLVVLSQVCTSSMVA) form a helical membrane-spanning segment. Residues 377–396 (GTATFLPKFLERQFSITASF) are Extracellular-facing. A helical transmembrane segment spans residues 397–420 (ANLLLGCLTIPLAIVGIVVGGVLV). The Cytoplasmic segment spans residues 421 to 424 (KRLH). The helical transmembrane segment at 425–448 (LSPMQCSALCLLGSLLCLLLSLPL) threads the bilayer. The Extracellular portion of the chain corresponds to 449-552 (FFIGCSTHHI…SACSRLVLPF (104 aa)). The Kazal-like domain occupies 471–531 (PSLFPGCSEP…VFYTNCSCVA (61 aa)). Disulfide bonds link cysteine 477-cysteine 508, cysteine 483-cysteine 504, and cysteine 492-cysteine 529. N-linked (GlcNAc...) asparagine glycosylation is found at asparagine 526 and asparagine 533. The helical transmembrane segment at 553 to 575 (ILLISLGAAVASITHTPSFMLIL) threads the bilayer. Residues 576 to 584 (RGVKKEDKT) are Cytoplasmic-facing. The chain crosses the membrane as a helical span at residues 585 to 610 (LAVGMQFMLLRVLAWMPSPVIHGSAI). At 611–643 (DTTCVHWALTCGRRAVCRYYDHDLLRNRFIGLQ) the chain is on the extracellular side. A helical membrane pass occupies residues 644–661 (FFFKSGSLVCFALVLAIL). Residues 662-682 (RQQSREASTKATVKSSDLQEL) lie on the Cytoplasmic side of the membrane.

It belongs to the organo anion transporter (TC 2.A.60) family. Expressed in liver, kidney, heart, lung and retina. Widely distributed in all brain regions.

It is found in the cell membrane. Its subcellular location is the basal cell membrane. It localises to the apical cell membrane. It catalyses the reaction coproporphyrin III(out) = coproporphyrin III(in). It carries out the reaction substance P(out) = substance P(in). The enzyme catalyses taurocholate(out) = taurocholate(in). The catalysed reaction is prostaglandin E1(out) = prostaglandin E1(in). It catalyses the reaction prostaglandin E2(out) = prostaglandin E2(in). It carries out the reaction prostaglandin D2(out) = prostaglandin D2(in). The enzyme catalyses leukotriene C4(out) = leukotriene C4(in). The catalysed reaction is L-thyroxine(out) = L-thyroxine(in). Functionally, mediates the Na(+)-independent transport of organic anions such as taurocholate, the prostaglandins D2 (PGD2), E1 (PGE1) and E2 (PGE2), leukotriene C4, thromboxane B2 and L-thyroxine. Also plays a role in the reuptake of neuropeptides such as substance P/TAC1 and vasoactive intestinal peptide/VIP released from retinal neurons. May act as a heme transporter that promotes cellular iron availability. Also transports heme by-product coproporphyrin III (CPIII), and may be involved in their hepatic disposition. May contribute to regulate the transport of organic compounds in testis across the blood-testis-barrier. Shows a pH-sensitive substrate specificity which may be ascribed to the protonation state of the binding site and leads to a stimulation of substrate transport in an acidic microenvironment. The exact transport mechanism has not been yet deciphered but most likely involves an anion exchange, coupling the cellular uptake of organic substrate with the efflux of an anionic compound. Hydrogencarbonate/HCO3(-) acts as a probable counteranion that exchanges for organic anions. Cytoplasmic glutamate may also act as counteranion in the placenta. The chain is Solute carrier organic anion transporter family member 2B1 from Rattus norvegicus (Rat).